A 582-amino-acid chain; its full sequence is Sodium-dependent low-affinity dicarboxylate transporter 1 (582 aa).

The next 12 membrane-spanning stretches (helical) occupy residues 17-37 (SFVIWGALLIFSPLLMFVGDS), 59-79 (ALPLAITAFIPMILFPLFGIM), 87-107 (AYLPDTCFLFMGGLMVALAVE), 130-150 (VMAGFMGVTGFLSMWISNTAT), 224-244 (LMLSVCFSANIGGAATITGTA), 271-291 (IFAFPMVFCCLIYCWCVLYLL), 317-337 (FSFAEMAVIFCFALLLVLWIL), 353-373 (EFVSDATSAMFIVILLFTLPE), 401-421 (FPWSVLFLLGGGFALAAGVKE), 455-475 (TNVCSNTVIASIFIPIVAELA), 482-502 (PLNFMLPVTISASFAFLLPVA), and 527-547 (VTLGCVVLSMLNMLLWAGFVF).

This sequence belongs to the SLC13A/DASS transporter (TC 2.A.47) family. NADC subfamily. Nad-1 and nad-2 are coexpressed in the intestinal tract from early larvae to adults, expression is from the pharynx through to the anus. Expression level is significantly greater in the anterior half of the intestine than in the posterior half.

Its subcellular location is the membrane. Its function is as follows. Low affinity sodium-dicarboxylate cotransporter that accepts a range of tricarboxylic acid-cycle intermediates with 4-5 carbon atoms. There is no interaction with monocarboxylates. The protein is Sodium-dependent low-affinity dicarboxylate transporter 1 (nac-1) of Caenorhabditis elegans.